Here is a 216-residue protein sequence, read N- to C-terminus: uncharacterized protein (216 aa).

This is an uncharacterized protein from Caenorhabditis elegans.